A 481-amino-acid polypeptide reads, in one-letter code: UDP-N-acetylmuramate--L-alanine ligase (481 aa).

Residue 126 to 132 participates in ATP binding; that stretch reads GTHGKTT.

The protein belongs to the MurCDEF family.

The protein localises to the cytoplasm. It catalyses the reaction UDP-N-acetyl-alpha-D-muramate + L-alanine + ATP = UDP-N-acetyl-alpha-D-muramoyl-L-alanine + ADP + phosphate + H(+). Its pathway is cell wall biogenesis; peptidoglycan biosynthesis. Its function is as follows. Cell wall formation. In Marinobacter nauticus (strain ATCC 700491 / DSM 11845 / VT8) (Marinobacter aquaeolei), this protein is UDP-N-acetylmuramate--L-alanine ligase.